The sequence spans 218 residues: uncharacterized protein (218 aa).

Residues 1 to 67 form a disordered region; sequence MARITNMGKR…KKKRSEYRRL (67 aa). The segment covering 29-39 has biased composition (low complexity); the sequence is NSSNTNEESSS. Residues 40–49 show a composition bias toward polar residues; the sequence is QDNMKASFGS. Positions 58 to 67 are enriched in basic residues; it reads KKKRSEYRRL. CCHC-type zinc fingers lie at residues 77–94, 100–117, and 124–141; these read KFCF…DCPE, SICF…ACSK, and AKCF…QCEQ. Residues 152–168 form a CCHC-type 4; atypical zinc finger; the sequence is CCKFCSSVHHLAKDCDQ.

This is an uncharacterized protein from Schizosaccharomyces pombe (strain 972 / ATCC 24843) (Fission yeast).